The following is a 203-amino-acid chain: Recombination protein RecR (203 aa).

Residues 57–72 (CQRCRTLAETPLCSIC) form a C4-type zinc finger. Residues 80–175 (GLLCVVESPA…RLSRLAYGVP (96 aa)) form the Toprim domain.

It belongs to the RecR family.

In terms of biological role, may play a role in DNA repair. It seems to be involved in an RecBC-independent recombinational process of DNA repair. It may act with RecF and RecO. The sequence is that of Recombination protein RecR from Chromohalobacter salexigens (strain ATCC BAA-138 / DSM 3043 / CIP 106854 / NCIMB 13768 / 1H11).